The following is a 1026-amino-acid chain: HEAT repeat-containing protein 4 (1026 aa).

Positions 135-175 (AVKTESSANPEKKLKKSKPASTVREAPRPLIHHPCMHPDML) are disordered. 3 HEAT repeats span residues 530 to 568 (LLPALEAALCDKNAHVRMAAAICQYAIQSHNPLARNIMQ), 724 to 760 (KLMTAKLLPSFLHCFSDDFTAVRRAACLAAGALQIRD), and 761 to 794 (KMVLECLLNLMQRDPYWKIKAFAIRALGQIGQVS).

The protein is HEAT repeat-containing protein 4 (HEATR4) of Homo sapiens (Human).